A 93-amino-acid chain; its full sequence is UPF0147 protein MJ1419 (93 aa).

It belongs to the UPF0147 family.

The chain is UPF0147 protein MJ1419 from Methanocaldococcus jannaschii (strain ATCC 43067 / DSM 2661 / JAL-1 / JCM 10045 / NBRC 100440) (Methanococcus jannaschii).